The chain runs to 211 residues: Protein-methionine-sulfoxide reductase heme-binding subunit MsrQ (211 aa).

The next 5 helical transmembrane spans lie at 10 to 30 (WLKVCLHLAGLLPFLWLVWAI), 82 to 102 (LWCFAWATLHLTSYALLELGV), 116 to 136 (PYLTLGIISWVILLALAFTST), 153 to 173 (FVYLVAILAPIHYLWSVKIIS), and 178 to 198 (IYAGLAVLLLALRYKKLLSLF).

This sequence belongs to the MsrQ family. As to quaternary structure, heterodimer of a catalytic subunit (MsrP) and a heme-binding subunit (MsrQ). It depends on FMN as a cofactor. Heme b serves as cofactor.

The protein resides in the cell inner membrane. Part of the MsrPQ system that repairs oxidized periplasmic proteins containing methionine sulfoxide residues (Met-O), using respiratory chain electrons. Thus protects these proteins from oxidative-stress damage caused by reactive species of oxygen and chlorine generated by the host defense mechanisms. MsrPQ is essential for the maintenance of envelope integrity under bleach stress, rescuing a wide series of structurally unrelated periplasmic proteins from methionine oxidation, including the primary periplasmic chaperone SurA and the lipoprotein Pal. MsrQ provides electrons for reduction to the reductase catalytic subunit MsrP, using the quinone pool of the respiratory chain. In Escherichia coli (strain 55989 / EAEC), this protein is Protein-methionine-sulfoxide reductase heme-binding subunit MsrQ.